The sequence spans 353 residues: Histidinol-phosphate aminotransferase (353 aa).

N6-(pyridoxal phosphate)lysine is present on K218.

It belongs to the class-II pyridoxal-phosphate-dependent aminotransferase family. Histidinol-phosphate aminotransferase subfamily. In terms of assembly, homodimer. Pyridoxal 5'-phosphate serves as cofactor.

The catalysed reaction is L-histidinol phosphate + 2-oxoglutarate = 3-(imidazol-4-yl)-2-oxopropyl phosphate + L-glutamate. Its pathway is amino-acid biosynthesis; L-histidine biosynthesis; L-histidine from 5-phospho-alpha-D-ribose 1-diphosphate: step 7/9. The protein is Histidinol-phosphate aminotransferase of Synechococcus sp. (strain JA-2-3B'a(2-13)) (Cyanobacteria bacterium Yellowstone B-Prime).